A 277-amino-acid polypeptide reads, in one-letter code: Urease accessory protein UreD (277 aa).

This sequence belongs to the UreD family. In terms of assembly, ureD, UreF and UreG form a complex that acts as a GTP-hydrolysis-dependent molecular chaperone, activating the urease apoprotein by helping to assemble the nickel containing metallocenter of UreC. The UreE protein probably delivers the nickel.

It is found in the cytoplasm. Required for maturation of urease via the functional incorporation of the urease nickel metallocenter. This Pseudomonas entomophila (strain L48) protein is Urease accessory protein UreD.